Reading from the N-terminus, the 160-residue chain is Glucan endo-1,3-beta-glucosidase, acidic isoform PR-O (160 aa).

E81 acts as the Nucleophile in catalysis.

It belongs to the glycosyl hydrolase 17 family. Post-translationally, the N-terminus is blocked.

The protein localises to the secreted. It localises to the extracellular space. It carries out the reaction Hydrolysis of (1-&gt;3)-beta-D-glucosidic linkages in (1-&gt;3)-beta-D-glucans.. Implicated in the defense of plants against pathogens. In Nicotiana tabacum (Common tobacco), this protein is Glucan endo-1,3-beta-glucosidase, acidic isoform PR-O (PR0).